Here is a 301-residue protein sequence, read N- to C-terminus: GTPase Era (301 aa).

The Era-type G domain maps to 7-175 (YCGFIAIVGR…AGIVRKHLPE (169 aa)). A G1 region spans residues 15-22 (GRPNVGKS). Residue 15-22 (GRPNVGKS) coordinates GTP. A G2 region spans residues 41-45 (QTTRH). The G3 stretch occupies residues 62–65 (DTPG). Residues 62–66 (DTPGL) and 124–127 (NKVD) contribute to the GTP site. Residues 124–127 (NKVD) are G4. The interval 154–156 (LSA) is G5. The 86-residue stretch at 198–283 (IREKLMRFLG…HLELWVKVKS (86 aa)) folds into the KH type-2 domain.

This sequence belongs to the TRAFAC class TrmE-Era-EngA-EngB-Septin-like GTPase superfamily. Era GTPase family. In terms of assembly, monomer.

The protein resides in the cytoplasm. Its subcellular location is the cell inner membrane. Functionally, an essential GTPase that binds both GDP and GTP, with rapid nucleotide exchange. Plays a role in 16S rRNA processing and 30S ribosomal subunit biogenesis and possibly also in cell cycle regulation and energy metabolism. The protein is GTPase Era of Enterobacter sp. (strain 638).